Here is a 654-residue protein sequence, read N- to C-terminus: Endoplasmic reticulum chaperone BiP (654 aa).

The signal sequence occupies residues 1 to 18 (MKLSLVAAMLLLLSAARA). The interval 1 to 80 (MKLSLVAAML…EGERLIGDAA (80 aa)) is required for interaction with ELAPOR1. 36-39 (GTTY) is an ATP binding site. Serine 86 is subject to Phosphoserine. Lysine 96 lines the ATP pocket. N6-acetyllysine is present on lysine 125. The nucleotide-binding (NBD) stretch occupies residues 125-280 (KPYIQVDIGG…KKKTGKDVRK (156 aa)). At tyrosine 160 the chain carries 3'-nitrotyrosine. Position 213 is an N6-acetyllysine (lysine 213). ATP is bound at residue 227–229 (GGT). Lysine 271 bears the N6-acetyllysine mark. 293-300 (EKAKRALS) lines the ATP pocket. Lysine 326 carries the post-translational modification N6-acetyllysine. Lysine 352 is covalently cross-linked (Glycyl lysine isopeptide (Lys-Gly) (interchain with G-Cter in SUMO2)). At lysine 353 the chain carries N6-acetyllysine; alternate. Lysine 353 participates in a covalent cross-link: Glycyl lysine isopeptide (Lys-Gly) (interchain with G-Cter in SUMO1); alternate. 364–367 (GSTR) lines the ATP pocket. Positions 409–419 (QDTGDLALLDV) are interdomain linker. The segment at 420–500 (CPLTLGIETV…PRGVPQIEVT (81 aa)) is substrate-binding (SBD). Lysine 447 is modified (N6-succinyllysine). Arginine 492 is modified (omega-N-methylarginine). Threonine 518 is modified (O-AMP-threonine; alternate). Threonine 518 carries the post-translational modification Phosphothreonine; alternate. Lysine 585 bears the N6,N6,N6-trimethyllysine; by METTL21A; in vitro mark. Residue lysine 585 is modified to N6,N6-dimethyllysine; alternate. N6-methyllysine; alternate is present on lysine 585. Lysine 591 carries the post-translational modification N6-methyllysine. The tract at residues 633-654 (KLYGSAGPPPTGEEDTAEKDEL) is disordered. A phosphothreonine mark is found at threonine 643 and threonine 648. Acidic residues predominate over residues 644–654 (GEEDTAEKDEL). The Prevents secretion from ER signature appears at 651–654 (KDEL).

It belongs to the heat shock protein 70 family. As to quaternary structure, monomer and homooligomer; homooligomerization via the interdomain linker inactivates the chaperone activity and acts as a storage of HSPA5/BiP molecules. Interacts with DNAJC1 (via J domain). Component of an EIF2 complex at least composed of CELF1/CUGBP1, CALR, CALR3, EIF2S1, EIF2S2, HSP90B1 and HSPA5. Part of a large chaperone multiprotein complex comprising DNAJB11, HSP90B1, HSPA5, HYOU, PDIA2, PDIA4, PDIA6, PPIB, SDF2L1, UGGT1 and very small amounts of ERP29, but not, or at very low levels, CALR nor CANX. Interacts with TMEM132A and TRIM21. May form a complex with ERLEC1, OS9, SEL1L and SYVN1. Interacts with DNAJC10. Interacts with DNAJB9/ERdj4; leading to recruit HSPA5/BiP to ERN1/IRE1. Interacts with ERN1/IRE1 (via luminal domain); the interaction takes place following interaction with DNAJB9/ERdj4 and leads to inactivate ERN1/IRE1, the interaction also competitively inhibits ERN1 interaction with MANF. Interacts directly with MANF (via SAP domain); the interaction inhibits ATP binding to HSPA5/BiP and subsequent nucleotide exchange. Interacts with EIF2AK3/PERK (via luminal domain); interaction leads to inactivate EIF2AK3/PERK. Interacts with MX1. Interacts with METTL23. Interacts with CEMIP; the interaction induces calcium leakage from the endoplasmic reticulum and cell migration. Interacts with PCSK4 form; the interaction takes place in the endoplasmic reticulum. Interacts with CIPC. Interacts with CCDC88B (via C-terminus); the interaction opposes ERN1-mediated JNK activation, protecting against apoptosis. Interacts with INPP5K; necessary for INPP5K localization at the endoplasmic reticulum. Interacts with MANF; the interaction is direct. Interacts with LOXL2; leading to activate the ERN1/IRE1-XBP1 pathway of the unfolded protein response. Interacts with CLU under stressed condition; interaction increases CLU protein stability; facilitates its retrotranslocation and redistribution to the mitochondria; cooperatively suppress stress-induced apoptosis by stabilizing mitochondrial membrane integrity. Interacts with CCDC47. Interacts with CLN3. Interacts with ELAPOR1; may regulate the function of HSPA5 in apoptosis and cell proliferation. Interacts with CASP7. Interacts with ILDR2; the interaction stabilizes ILDR2 expression. Interacts with ADAM7. In unstressed cells, AMPylation at Thr-518 by FICD inactivates the chaperome activity: AMPylated form is locked in a relatively inert state and only weakly stimulated by J domain-containing proteins. In response to endoplasmic reticulum stress, de-AMPylation by the same protein, FICD, restores the chaperone activity.

It is found in the endoplasmic reticulum lumen. Its subcellular location is the melanosome. The protein resides in the cytoplasm. It localises to the cell surface. The enzyme catalyses ATP + H2O = ADP + phosphate + H(+). Its activity is regulated as follows. The chaperone activity is regulated by ATP-induced allosteric coupling of the nucleotide-binding (NBD) and substrate-binding (SBD) domains. In the ADP-bound and nucleotide-free (apo) states, the two domains have little interaction. In contrast, in the ATP-bound state the two domains are tightly coupled, which results in drastically accelerated kinetics in both binding and release of polypeptide substrates. J domain-containing co-chaperones (DNAJB9/ERdj4 or DNAJC10/ERdj5) stimulate the ATPase activity and are required for efficient substrate recognition by HSPA5/BiP. Homooligomerization inactivates participating HSPA5/BiP protomers and probably act as reservoirs to store HSPA5/BiP molecules when they are not needed by the cell. Endoplasmic reticulum chaperone that plays a key role in protein folding and quality control in the endoplasmic reticulum lumen. Involved in the correct folding of proteins and degradation of misfolded proteins via its interaction with DNAJC10/ERdj5, probably to facilitate the release of DNAJC10/ERdj5 from its substrate. Acts as a key repressor of the EIF2AK3/PERK and ERN1/IRE1-mediated unfolded protein response (UPR). In the unstressed endoplasmic reticulum, recruited by DNAJB9/ERdj4 to the luminal region of ERN1/IRE1, leading to disrupt the dimerization of ERN1/IRE1, thereby inactivating ERN1/IRE1. Also binds and inactivates EIF2AK3/PERK in unstressed cells. Accumulation of misfolded protein in the endoplasmic reticulum causes release of HSPA5/BiP from ERN1/IRE1 and EIF2AK3/PERK, allowing their homodimerization and subsequent activation. Plays an auxiliary role in post-translational transport of small presecretory proteins across endoplasmic reticulum (ER). May function as an allosteric modulator for SEC61 channel-forming translocon complex, likely cooperating with SEC62 to enable the productive insertion of these precursors into SEC61 channel. Appears to specifically regulate translocation of precursors having inhibitory residues in their mature region that weaken channel gating. May also play a role in apoptosis and cell proliferation. In Pongo abelii (Sumatran orangutan), this protein is Endoplasmic reticulum chaperone BiP.